The following is a 433-amino-acid chain: GTPase Der (433 aa).

EngA-type G domains follow at residues 5 to 167 (KKVL…GEAN) and 174 to 349 (IKVG…DQLE). Residues 11-18 (GRPNVGKS), 58-62 (DTGGF), 119-122 (NKVD), 180-187 (GKPNSGKS), 227-231 (DTAGI), and 292-295 (SKWD) each bind GTP. In terms of domain architecture, KH-like spans 350 to 429 (FKTSTPDLNK…PILVELREKI (80 aa)).

This sequence belongs to the TRAFAC class TrmE-Era-EngA-EngB-Septin-like GTPase superfamily. EngA (Der) GTPase family. Associates with the 50S ribosomal subunit.

In terms of biological role, GTPase that plays an essential role in the late steps of ribosome biogenesis. This chain is GTPase Der, found in Borreliella afzelii (strain PKo) (Borrelia afzelii).